The chain runs to 329 residues: 4-hydroxythreonine-4-phosphate dehydrogenase (329 aa).

2 residues coordinate substrate: histidine 136 and threonine 137. A divalent metal cation-binding residues include histidine 166, histidine 211, and histidine 266. Positions 274, 283, and 292 each coordinate substrate.

The protein belongs to the PdxA family. Homodimer. Requires Zn(2+) as cofactor. Mg(2+) serves as cofactor. Co(2+) is required as a cofactor.

It localises to the cytoplasm. It carries out the reaction 4-(phosphooxy)-L-threonine + NAD(+) = 3-amino-2-oxopropyl phosphate + CO2 + NADH. The protein operates within cofactor biosynthesis; pyridoxine 5'-phosphate biosynthesis; pyridoxine 5'-phosphate from D-erythrose 4-phosphate: step 4/5. Its function is as follows. Catalyzes the NAD(P)-dependent oxidation of 4-(phosphooxy)-L-threonine (HTP) into 2-amino-3-oxo-4-(phosphooxy)butyric acid which spontaneously decarboxylates to form 3-amino-2-oxopropyl phosphate (AHAP). The sequence is that of 4-hydroxythreonine-4-phosphate dehydrogenase from Salmonella typhi.